Consider the following 489-residue polypeptide: N-succinylglutamate 5-semialdehyde dehydrogenase (489 aa).

223-228 is a binding site for NAD(+); it reads GSSRTG. Catalysis depends on residues glutamate 246 and cysteine 280.

It belongs to the aldehyde dehydrogenase family. AstD subfamily.

It carries out the reaction N-succinyl-L-glutamate 5-semialdehyde + NAD(+) + H2O = N-succinyl-L-glutamate + NADH + 2 H(+). It functions in the pathway amino-acid degradation; L-arginine degradation via AST pathway; L-glutamate and succinate from L-arginine: step 4/5. Its function is as follows. Catalyzes the NAD-dependent reduction of succinylglutamate semialdehyde into succinylglutamate. The protein is N-succinylglutamate 5-semialdehyde dehydrogenase of Aeromonas hydrophila subsp. hydrophila (strain ATCC 7966 / DSM 30187 / BCRC 13018 / CCUG 14551 / JCM 1027 / KCTC 2358 / NCIMB 9240 / NCTC 8049).